We begin with the raw amino-acid sequence, 125 residues long: Holo-[acyl-carrier-protein] synthase (125 aa).

Positions 8 and 57 each coordinate Mg(2+).

The protein belongs to the P-Pant transferase superfamily. AcpS family. The cofactor is Mg(2+).

Its subcellular location is the cytoplasm. It catalyses the reaction apo-[ACP] + CoA = holo-[ACP] + adenosine 3',5'-bisphosphate + H(+). Functionally, transfers the 4'-phosphopantetheine moiety from coenzyme A to a Ser of acyl-carrier-protein. This is Holo-[acyl-carrier-protein] synthase from Blochmanniella pennsylvanica (strain BPEN).